The primary structure comprises 1102 residues: GPI inositol-deacylase (1102 aa).

Residues 1–90 (MHRRSSGSPV…NPPDCKSSSV (90 aa)) are disordered. Residues 58–70 (GASTPRSRNSSMW) show a composition bias toward polar residues. N-linked (GlcNAc...) asparagine glycosylation is present at N66. Over residues 72–83 (TPPSSSMTSNPP) the composition is skewed to low complexity. A helical membrane pass occupies residues 121–141 (PCSILTAFTTLVASIFLFFIL). Residue S308 is part of the active site. 2 helical membrane passes run 744-764 (LVMRYRTVFAAFPLLVVALVM) and 790-810 (SSLPMLLLAMSLLASSLATST). The N-linked (GlcNAc...) asparagine glycan is linked to N824. 6 consecutive transmembrane segments (helical) span residues 867–887 (VALALIFLLTSIYGFLRSKSG), 914–934 (ILLALVSTVIPYQFAYMVACI), 964–984 (SIFLLMLWILPINALVLLVWA), 1001–1021 (VLSIMPFVLLVEAMTTGTMIP), 1033–1053 (MLFFFIAIYSAIYGVSYAYLL), and 1056–1076 (LTNILAAWLVGIYFSASGFSL).

This sequence belongs to the GPI inositol-deacylase family.

It localises to the endoplasmic reticulum membrane. Functionally, involved in inositol deacylation of GPI-anchored proteins which plays important roles in the quality control and ER-associated degradation of GPI-anchored proteins. This Aspergillus oryzae (strain ATCC 42149 / RIB 40) (Yellow koji mold) protein is GPI inositol-deacylase (bst1).